The primary structure comprises 269 residues: Cleavage and polyadenylation specificity factor subunit 4 (269 aa).

5 consecutive C3H1-type zinc fingers follow at residues 35–61 (KSGA…RHIS), 62–89 (GEKT…HEYD), 90–117 (MTKM…HIDP), 118–142 (ESKI…RHRH), and 143–169 (TRRV…HPRF). The interval 173-199 (MGTTEQPPLPQQTQPPAKQSNNPPLQR) is disordered. A phosphoserine mark is found at Ser200, Ser202, and Ser212. The CCHC-type zinc-finger motif lies at 243–260 (VTCYKCGEKGHYANRCTK). A Phosphoserine modification is found at Ser267.

The protein belongs to the CPSF4/YTH1 family. In terms of assembly, component of the cleavage and polyadenylation specificity factor (CPSF) complex, composed of CPSF1, CPSF2, CPSF3, CPSF4 and FIP1L1. Interacts with FIP1L1. (Microbial infection) Interacts with influenza A virus NS1 blocks processing of pre-mRNAs, thereby preventing nuclear export of host cell mRNAs.

It is found in the nucleus. In terms of biological role, component of the cleavage and polyadenylation specificity factor (CPSF) complex that play a key role in pre-mRNA 3'-end formation, recognizing the AAUAAA signal sequence and interacting with poly(A) polymerase and other factors to bring about cleavage and poly(A) addition. CPSF4 binds RNA polymers with a preference for poly(U). The chain is Cleavage and polyadenylation specificity factor subunit 4 (CPSF4) from Homo sapiens (Human).